The sequence spans 147 residues: Putative pre-16S rRNA nuclease (147 aa).

Belongs to the YqgF nuclease family.

It is found in the cytoplasm. In terms of biological role, could be a nuclease involved in processing of the 5'-end of pre-16S rRNA. The sequence is that of Putative pre-16S rRNA nuclease from Acinetobacter baylyi (strain ATCC 33305 / BD413 / ADP1).